We begin with the raw amino-acid sequence, 629 residues long: Phosphomethylpyrimidine synthase (629 aa).

Polar residues predominate over residues 1 to 13; the sequence is MTTKSKNAINLSD. Positions 1-22 are disordered; the sequence is MTTKSKNAINLSDSAKVDEQSV. Substrate-binding positions include Asn233, Met262, Tyr291, His327, 347–349, 388–391, and Glu427; these read SRG and DGLR. His431 contributes to the Zn(2+) binding site. Tyr454 contacts substrate. His495 contributes to the Zn(2+) binding site. Positions 575, 578, and 583 each coordinate [4Fe-4S] cluster.

The protein belongs to the ThiC family. In terms of assembly, homodimer. Requires [4Fe-4S] cluster as cofactor.

The enzyme catalyses 5-amino-1-(5-phospho-beta-D-ribosyl)imidazole + S-adenosyl-L-methionine = 4-amino-2-methyl-5-(phosphooxymethyl)pyrimidine + CO + 5'-deoxyadenosine + formate + L-methionine + 3 H(+). It participates in cofactor biosynthesis; thiamine diphosphate biosynthesis. Functionally, catalyzes the synthesis of the hydroxymethylpyrimidine phosphate (HMP-P) moiety of thiamine from aminoimidazole ribotide (AIR) in a radical S-adenosyl-L-methionine (SAM)-dependent reaction. The polypeptide is Phosphomethylpyrimidine synthase (Pseudomonas fluorescens (strain Pf0-1)).